The primary structure comprises 307 residues: Aspartate carbamoyltransferase catalytic subunit (307 aa).

Carbamoyl phosphate is bound by residues Arg-54 and Thr-55. Lys-83 contacts L-aspartate. Residues Arg-104, His-132, and Gln-135 each coordinate carbamoyl phosphate. 2 residues coordinate L-aspartate: Arg-165 and Arg-228. Residues Leu-267 and Pro-268 each contribute to the carbamoyl phosphate site.

This sequence belongs to the aspartate/ornithine carbamoyltransferase superfamily. ATCase family. In terms of assembly, heterododecamer (2C3:3R2) of six catalytic PyrB chains organized as two trimers (C3), and six regulatory PyrI chains organized as three dimers (R2).

The enzyme catalyses carbamoyl phosphate + L-aspartate = N-carbamoyl-L-aspartate + phosphate + H(+). It participates in pyrimidine metabolism; UMP biosynthesis via de novo pathway; (S)-dihydroorotate from bicarbonate: step 2/3. In terms of biological role, catalyzes the condensation of carbamoyl phosphate and aspartate to form carbamoyl aspartate and inorganic phosphate, the committed step in the de novo pyrimidine nucleotide biosynthesis pathway. The protein is Aspartate carbamoyltransferase catalytic subunit of Clostridium perfringens (strain SM101 / Type A).